Here is a 268-residue protein sequence, read N- to C-terminus: Indole-3-glycerol phosphate synthase (268 aa).

The protein belongs to the TrpC family.

The enzyme catalyses 1-(2-carboxyphenylamino)-1-deoxy-D-ribulose 5-phosphate + H(+) = (1S,2R)-1-C-(indol-3-yl)glycerol 3-phosphate + CO2 + H2O. The protein operates within amino-acid biosynthesis; L-tryptophan biosynthesis; L-tryptophan from chorismate: step 4/5. This chain is Indole-3-glycerol phosphate synthase, found in Acinetobacter baumannii (strain AB0057).